The primary structure comprises 146 residues: 3-hydroxyacyl-[acyl-carrier-protein] dehydratase FabZ (146 aa).

H49 is an active-site residue.

This sequence belongs to the thioester dehydratase family. FabZ subfamily.

It is found in the cytoplasm. The catalysed reaction is a (3R)-hydroxyacyl-[ACP] = a (2E)-enoyl-[ACP] + H2O. Involved in unsaturated fatty acids biosynthesis. Catalyzes the dehydration of short chain beta-hydroxyacyl-ACPs and long chain saturated and unsaturated beta-hydroxyacyl-ACPs. In Pseudomonas fluorescens (strain ATCC BAA-477 / NRRL B-23932 / Pf-5), this protein is 3-hydroxyacyl-[acyl-carrier-protein] dehydratase FabZ.